The following is a 114-amino-acid chain: Protein ELF4-LIKE 4 (114 aa).

The tract at residues Ser87–Gly114 is disordered. Over residues Asp89–Leu100 the composition is skewed to polar residues.

Belongs to the EARLY FLOWERING 4 family. As to quaternary structure, homodimer.

The protein localises to the nucleus. Functionally, component of the central CCA1/LHY-TOC1 feedback loop in the circadian clock that promotes clock accuracy and is required for sustained rhythms in the absence of daily light/dark cycles. The sequence is that of Protein ELF4-LIKE 4 (EFL4) from Arabidopsis thaliana (Mouse-ear cress).